A 453-amino-acid chain; its full sequence is Bifunctional protein GlmU (453 aa).

The tract at residues 1–225 is pyrophosphorylase; sequence MNIVILAAGT…EWETLGVNSK (225 aa). UDP-N-acetyl-alpha-D-glucosamine is bound by residues 6–9, K20, Q71, 76–77, 98–100, G135, E150, N165, and N223; these read LAAG, GT, and YGD. D100 provides a ligand contact to Mg(2+). Mg(2+) is bound at residue N223. A linker region spans residues 226–246; it reads AQLAELERIHQRNIAEALLVD. An N-acetyltransferase region spans residues 247-453; the sequence is GVTLADPARL…GYVRPVKKKS (207 aa). The UDP-N-acetyl-alpha-D-glucosamine site is built by R329 and K347. The active-site Proton acceptor is H359. UDP-N-acetyl-alpha-D-glucosamine-binding residues include Y362 and N373. Acetyl-CoA is bound by residues A376, 382 to 383, S401, and A419; that span reads NY.

In the N-terminal section; belongs to the N-acetylglucosamine-1-phosphate uridyltransferase family. The protein in the C-terminal section; belongs to the transferase hexapeptide repeat family. Homotrimer. Mg(2+) is required as a cofactor.

It is found in the cytoplasm. It catalyses the reaction alpha-D-glucosamine 1-phosphate + acetyl-CoA = N-acetyl-alpha-D-glucosamine 1-phosphate + CoA + H(+). The enzyme catalyses N-acetyl-alpha-D-glucosamine 1-phosphate + UTP + H(+) = UDP-N-acetyl-alpha-D-glucosamine + diphosphate. The protein operates within nucleotide-sugar biosynthesis; UDP-N-acetyl-alpha-D-glucosamine biosynthesis; N-acetyl-alpha-D-glucosamine 1-phosphate from alpha-D-glucosamine 6-phosphate (route II): step 2/2. Its pathway is nucleotide-sugar biosynthesis; UDP-N-acetyl-alpha-D-glucosamine biosynthesis; UDP-N-acetyl-alpha-D-glucosamine from N-acetyl-alpha-D-glucosamine 1-phosphate: step 1/1. It functions in the pathway bacterial outer membrane biogenesis; LPS lipid A biosynthesis. Its function is as follows. Catalyzes the last two sequential reactions in the de novo biosynthetic pathway for UDP-N-acetylglucosamine (UDP-GlcNAc). The C-terminal domain catalyzes the transfer of acetyl group from acetyl coenzyme A to glucosamine-1-phosphate (GlcN-1-P) to produce N-acetylglucosamine-1-phosphate (GlcNAc-1-P), which is converted into UDP-GlcNAc by the transfer of uridine 5-monophosphate (from uridine 5-triphosphate), a reaction catalyzed by the N-terminal domain. The protein is Bifunctional protein GlmU of Burkholderia lata (strain ATCC 17760 / DSM 23089 / LMG 22485 / NCIMB 9086 / R18194 / 383).